The chain runs to 377 residues: Probable riboflavin import permease protein RfuC (377 aa).

Transmembrane regions (helical) follow at residues Val4–Leu24, Ala49–Lys69, Met72–Leu92, Val98–Leu118, Ile135–Val155, Phe182–Phe202, Phe223–Leu245, Phe249–Tyr268, Ala274–Met294, and Leu303–Ile323.

This sequence belongs to the binding-protein-dependent transport system permease family. The complex is probably composed of two ATP-binding proteins (RfuB), two transmembrane proteins (RfuC and RfuD) and a solute-binding protein (RfuA).

It localises to the cell inner membrane. In terms of biological role, probably part of the ABC transporter complex RfuABCD involved in riboflavin import. Probably responsible for the translocation of the substrate across the membrane. This Treponema pallidum (strain Nichols) protein is Probable riboflavin import permease protein RfuC.